Here is a 367-residue protein sequence, read N- to C-terminus: uncharacterized protein (367 aa).

A disordered region spans residues 333 to 367; it reads RERRPTLNAQRAHAAAQQQPRRRNRRQQGTGASAS. Residues 341 to 351 show a composition bias toward low complexity; that stretch reads AQRAHAAAQQQ.

This is an uncharacterized protein from Amazona oratrix (yellow-headed parrot).